The sequence spans 132 residues: Ribonuclease P protein component 4 (132 aa).

Zn(2+) contacts are provided by Cys-67, Cys-70, Cys-96, and Cys-99.

Belongs to the eukaryotic/archaeal RNase P protein component 4 family. In terms of assembly, consists of a catalytic RNA component and at least 4-5 protein subunits. The cofactor is Zn(2+).

Its subcellular location is the cytoplasm. The catalysed reaction is Endonucleolytic cleavage of RNA, removing 5'-extranucleotides from tRNA precursor.. Functionally, part of ribonuclease P, a protein complex that generates mature tRNA molecules by cleaving their 5'-ends. The chain is Ribonuclease P protein component 4 from Thermococcus kodakarensis (strain ATCC BAA-918 / JCM 12380 / KOD1) (Pyrococcus kodakaraensis (strain KOD1)).